A 320-amino-acid polypeptide reads, in one-letter code: Nucleotide-binding protein Pcryo_0127 (320 aa).

32–39 (GRSGSGKT) is an ATP binding site. 82 to 85 (DIRT) is a GTP binding site.

Belongs to the RapZ-like family.

In terms of biological role, displays ATPase and GTPase activities. The sequence is that of Nucleotide-binding protein Pcryo_0127 from Psychrobacter cryohalolentis (strain ATCC BAA-1226 / DSM 17306 / VKM B-2378 / K5).